The following is a 226-amino-acid chain: 7-carboxy-7-deazaguanine synthase (226 aa).

Residues 10–12 (LQG) and arginine 25 each bind substrate. A Radical SAM core domain is found at 16–221 (YTGIPCIFVR…LQTHKFIWTP (206 aa)). 3 residues coordinate [4Fe-4S] cluster: cysteine 29, cysteine 33, and cysteine 36. Serine 38 is a binding site for Mg(2+). Threonine 69 contacts substrate. S-adenosyl-L-methionine is bound at residue glycine 71.

The protein belongs to the radical SAM superfamily. 7-carboxy-7-deazaguanine synthase family. Homodimer. [4Fe-4S] cluster is required as a cofactor. S-adenosyl-L-methionine serves as cofactor. The cofactor is Mg(2+).

The enzyme catalyses 6-carboxy-5,6,7,8-tetrahydropterin + H(+) = 7-carboxy-7-deazaguanine + NH4(+). The protein operates within purine metabolism; 7-cyano-7-deazaguanine biosynthesis. In terms of biological role, catalyzes the complex heterocyclic radical-mediated conversion of 6-carboxy-5,6,7,8-tetrahydropterin (CPH4) to 7-carboxy-7-deazaguanine (CDG), a step common to the biosynthetic pathways of all 7-deazapurine-containing compounds. The sequence is that of 7-carboxy-7-deazaguanine synthase from Koribacter versatilis (strain Ellin345).